The sequence spans 358 residues: Peptide chain release factor 1 (358 aa).

At Gln233 the chain carries N5-methylglutamine. The interval 286-309 (AELASARKSQVGTGDRSERIRTYN) is disordered.

It belongs to the prokaryotic/mitochondrial release factor family. In terms of processing, methylated by PrmC. Methylation increases the termination efficiency of RF1.

The protein resides in the cytoplasm. Its function is as follows. Peptide chain release factor 1 directs the termination of translation in response to the peptide chain termination codons UAG and UAA. This Carboxydothermus hydrogenoformans (strain ATCC BAA-161 / DSM 6008 / Z-2901) protein is Peptide chain release factor 1.